We begin with the raw amino-acid sequence, 412 residues long: Homoserine dehydrogenase (412 aa).

NADP(+) is bound by residues 9-16 and K105; that span reads LGIGTVGG. Position 190 (E190) interacts with substrate. K205 (proton donor) is an active-site residue. One can recognise an ACT domain in the interval 330–407; it reads YLRLRAVDKP…ISGKVTRLRM (78 aa).

It belongs to the homoserine dehydrogenase family.

The catalysed reaction is L-homoserine + NADP(+) = L-aspartate 4-semialdehyde + NADPH + H(+). It catalyses the reaction L-homoserine + NAD(+) = L-aspartate 4-semialdehyde + NADH + H(+). Its pathway is amino-acid biosynthesis; L-methionine biosynthesis via de novo pathway; L-homoserine from L-aspartate: step 3/3. The protein operates within amino-acid biosynthesis; L-threonine biosynthesis; L-threonine from L-aspartate: step 3/5. In Methylobacillus glycogenes, this protein is Homoserine dehydrogenase (hom).